The primary structure comprises 396 residues: Capsular polysaccharide biosynthesis protein CapF (396 aa).

12 helical membrane-spanning segments follow: residues 7-27 (YMFV…LVIV), 41-61 (ALVI…SVIV), 74-94 (AILS…YVLG), 101-121 (ILIV…YGIY), 129-149 (LLGI…YIIY), 153-173 (HNLN…FAII), 198-218 (IFIL…NTGI), 232-252 (LGIF…ANSI), 279-299 (MVFI…FLGE), 315-335 (IILI…FLGT), 351-371 (LILL…YSLL), and 372-392 (GAAL…YYFY).

This sequence belongs to the polysaccharide synthase family.

The protein resides in the cell membrane. It participates in capsule biogenesis; capsule polysaccharide biosynthesis. In terms of biological role, required for the biosynthesis of type 1 capsular polysaccharide. This chain is Capsular polysaccharide biosynthesis protein CapF (capF), found in Staphylococcus aureus.